Reading from the N-terminus, the 105-residue chain is MSSAATKPVKRSGIIKGFNKGHAVAKRTVTSTFKKQVVTKRVAAIRDVIREISGFSPYERRVSELLKSGLDKRALKVAKKRLGSIQAGKKKRDDIANINRKASAK.

The segment at Gln-86 to Lys-105 is disordered.

It belongs to the eukaryotic ribosomal protein eL36 family.

The chain is Large ribosomal subunit protein eL36 (rpl36) from Dictyostelium discoideum (Social amoeba).